A 171-amino-acid chain; its full sequence is Spiderine-2a (171 aa).

The signal sequence occupies residues 1–18 (MKFALVLLGVCAFYLVNA). A propeptide spans 19–58 (TGDLETELEASELQELQEALDLIAETPLESLEAEELEEAR) (removed in mature form). Residues 59–104 (KFKLPKINWGKLASKAKDVYKKGQKLAKNKNVKKALKYGKQLAENL) form a linear cationic cytotoxin domain region. The Oxytoxin-type inhibitor cystine knot (ICK) domain occupies 118–171 (NNKCWAIGTRCTDDCDCCPEHHCHCPAKSWTFGLIPCSCQVTESDKVNKCPPAE). 5 cysteine pairs are disulfide-bonded: cysteine 121–cysteine 135, cysteine 128–cysteine 140, cysteine 132–cysteine 167, cysteine 134–cysteine 156, and cysteine 142–cysteine 154.

Post-translationally, disulfide bonds. In terms of tissue distribution, expressed by the venom gland.

It localises to the secreted. Functionally, has antimicrobial, insecticidal, cytolytic and cytotoxic activity. This is Spiderine-2a from Oxyopes takobius (Lynx spider).